The chain runs to 177 residues: MAIRLILEAPDPRLRTISTPVEAVDDELRALIADMFETMYDAPGIGLAAIQVGVPKRVLVIDLQEEEDAEGKPIRHPRVFINPELFDPSEEQSVYNEGCLSVPEQYAEVERPAVIHARWLDEQGAKHEERLEGLLATCLQHEMDHLEGILFIDHLSRLKREMVMKKLEKARRARKAA.

2 residues coordinate Fe cation: Cys99 and His141. Glu142 is an active-site residue. Residue His145 participates in Fe cation binding.

The protein belongs to the polypeptide deformylase family. The cofactor is Fe(2+).

It carries out the reaction N-terminal N-formyl-L-methionyl-[peptide] + H2O = N-terminal L-methionyl-[peptide] + formate. In terms of biological role, removes the formyl group from the N-terminal Met of newly synthesized proteins. Requires at least a dipeptide for an efficient rate of reaction. N-terminal L-methionine is a prerequisite for activity but the enzyme has broad specificity at other positions. This is Peptide deformylase from Rhizorhabdus wittichii (strain DSM 6014 / CCUG 31198 / JCM 15750 / NBRC 105917 / EY 4224 / RW1) (Sphingomonas wittichii).